We begin with the raw amino-acid sequence, 241 residues long: Transcriptional regulatory protein SrrA (241 aa).

In terms of domain architecture, Response regulatory spans 4 to 117; sequence EILIVDDEDR…EVVLRVKALL (114 aa). The residue at position 53 (aspartate 53) is a 4-aspartylphosphate. Positions 133–233 form a DNA-binding region, ompR/PhoB-type; sequence RDVIEFKHLE…VWGVGYKFEV (101 aa).

Phosphorylated by SrrB.

It localises to the cytoplasm. Member of the two-component regulatory system SrrA/SrrB, which is involved in the global regulation of staphylococcal virulence factors in response to environmental oxygen levels as well as biofilm formation. Also plays an essential role in host-derived nitric oxide resistance by regulating hmp/flavohemoglobin, an enzyme that detoxifies nitric oxide by converting it to nitrate. Functions as a transcription regulator by direct binding to promoter regions of target genes. The protein is Transcriptional regulatory protein SrrA (srrA) of Staphylococcus aureus (strain NCTC 8325 / PS 47).